We begin with the raw amino-acid sequence, 189 residues long: Prophage DNA-packing protein NohA (189 aa).

This sequence belongs to the terminase small subunit family.

The chain is Prophage DNA-packing protein NohA (nohA) from Escherichia coli (strain K12).